The following is a 126-amino-acid chain: Protein ApaG (126 aa).

Residues 2-126 (DVSQPRIQIQ…FRLAVPNILN (125 aa)) form the ApaG domain.

This Vibrio vulnificus (strain CMCP6) protein is Protein ApaG.